The sequence spans 239 residues: Ribosomal RNA small subunit methyltransferase G (239 aa).

S-adenosyl-L-methionine contacts are provided by residues glycine 78, phenylalanine 83, 129-130, and arginine 148; that span reads AE.

Belongs to the methyltransferase superfamily. RNA methyltransferase RsmG family.

Its subcellular location is the cytoplasm. In terms of biological role, specifically methylates the N7 position of a guanine in 16S rRNA. This is Ribosomal RNA small subunit methyltransferase G from Alkaliphilus metalliredigens (strain QYMF).